The following is a 328-amino-acid chain: MKLFNFKKLSMLIAGFTLVTSPALAEISLRFGYEAPRSDSQHSAAKKFNDLLMKKTKGEIKLKLFPDSTLGNAQTMISSVRGGTIDLEMSGSPNFTGLEPKLNVIDIPFIFKDREHVYKVLDGEVGQNLLKDLEKQGLKGLAFWDVGFRAFSNSKQTVTKPEHIKGLKVRTNQNPMYIEAFKLLGSNPVPMPLAELYTALETRAVDAQEHPIGIFWSSKLYEVQKYLSLTNHGYTPLIVVMNKAKFDSLLPALQTAIIEAAKEAGQFQRDLNVKNEQNIISKLRKQGVEVIEKINTEPFKTLIEEKVRKSFIEKHGDDLLKKVDALSE.

The N-terminal stretch at 1 to 25 (MKLFNFKKLSMLIAGFTLVTSPALA) is a signal peptide.

The protein belongs to the bacterial solute-binding protein 7 family.

Its subcellular location is the periplasm. This is an uncharacterized protein from Haemophilus influenzae (strain ATCC 51907 / DSM 11121 / KW20 / Rd).